We begin with the raw amino-acid sequence, 586 residues long: NudC domain-containing protein 1 (586 aa).

The segment at 259 to 278 is disordered; sequence KDQPESSEDEKMDEDNKREP. Positions 275–364 constitute a CS domain; the sequence is KREPLYNWHQ…EPGSTWAELV (90 aa).

The protein resides in the cytoplasm. It localises to the nucleus. The protein is NudC domain-containing protein 1 of Xenopus tropicalis (Western clawed frog).